The following is a 395-amino-acid chain: MAKAKFERTKPHVNIGTIGHVDHGKTSLTAAITTVLAKTGGAKATAYDQIDAAPEEKERGITISTAHVEYETKNRHYAHVDCPGHADYIKNMITGAAQMDGAILVVSAADGPMLQTREHILLAKQVGVPAMVVFLNKVDVVDDPALLELVEMEVRDLLLQYGFPAYEVPIIKGSALQALAGKPEGEKAINELMDAVDNYIPHPVRATDKPFLMPIEDVFSISGRGTVVTGRVESGIIKVGEEVEIVGLKETQKTTCTGVEMFRKLLDEGQAGDNVGILLRGTKREEVERGQVLAKPGSIKPHDQFEAEVYVLSKEEGGRHTPFTNDYRPQFYFRTTDVTGTIKLPADKQMVMPGDNATTFTVELIKPIAMQQGSKFSIREGGKTVGAGVVTKINN.

The tr-type G domain maps to 10–204 (KPHVNIGTIG…AVDNYIPHPV (195 aa)). A G1 region spans residues 19–26 (GHVDHGKT). Residue 19 to 26 (GHVDHGKT) participates in GTP binding. Thr-26 lines the Mg(2+) pocket. The tract at residues 60 to 64 (GITIS) is G2. Residues 81–84 (DCPG) are G3. Residues 81-85 (DCPGH) and 136-139 (NKVD) contribute to the GTP site. The tract at residues 136 to 139 (NKVD) is G4. A G5 region spans residues 174–176 (SAL).

It belongs to the TRAFAC class translation factor GTPase superfamily. Classic translation factor GTPase family. EF-Tu/EF-1A subfamily. In terms of assembly, monomer.

It is found in the cytoplasm. It carries out the reaction GTP + H2O = GDP + phosphate + H(+). GTP hydrolase that promotes the GTP-dependent binding of aminoacyl-tRNA to the A-site of ribosomes during protein biosynthesis. In Rickettsia akari (strain Hartford), this protein is Elongation factor Tu.